Consider the following 243-residue polypeptide: Cell division protein ZipA (243 aa).

Residues 1–4 (MSDM) are Periplasmic-facing. A helical membrane pass occupies residues 5–25 (AMIRIGILIAGLLLVAAIFLF). Residues 26–243 (GRPKKSPQGR…APPLTKSPRW (218 aa)) lie on the Cytoplasmic side of the membrane. The interval 30–89 (KSPQGRRVDKDEGQPRERREPVISSEFGVEDDAAERAEGVEQSELNLEGQDASGGNEVGK) is disordered. Residues 35–50 (RRVDKDEGQPRERREP) show a composition bias toward basic and acidic residues.

The protein belongs to the ZipA family. As to quaternary structure, interacts with FtsZ via their C-terminal domains.

It localises to the cell inner membrane. Functionally, essential cell division protein that stabilizes the FtsZ protofilaments by cross-linking them and that serves as a cytoplasmic membrane anchor for the Z ring. Also required for the recruitment to the septal ring of downstream cell division proteins. This is Cell division protein ZipA from Xanthomonas euvesicatoria pv. vesicatoria (strain 85-10) (Xanthomonas campestris pv. vesicatoria).